Consider the following 357-residue polypeptide: DNA primase small subunit PriS (357 aa).

Active-site residues include Asp105, Asp107, and Asp259.

It belongs to the eukaryotic-type primase small subunit family. Heterodimer of a small subunit (PriS) and a large subunit (PriL). It depends on Mg(2+) as a cofactor. The cofactor is Mn(2+).

Its function is as follows. Catalytic subunit of DNA primase, an RNA polymerase that catalyzes the synthesis of short RNA molecules used as primers for DNA polymerase during DNA replication. The small subunit contains the primase catalytic core and has DNA synthesis activity on its own. Binding to the large subunit stabilizes and modulates the activity, increasing the rate of DNA synthesis while decreasing the length of the DNA fragments, and conferring RNA synthesis capability. The DNA polymerase activity may enable DNA primase to also catalyze primer extension after primer synthesis. May also play a role in DNA repair. This Methanococcus maripaludis (strain C5 / ATCC BAA-1333) protein is DNA primase small subunit PriS.